A 672-amino-acid chain; its full sequence is Tubulin--tyrosine ligase-like protein 12 (672 aa).

In terms of domain architecture, TTL spans 332 to 670; the sequence is KIKIFLQIFA…LDEIDPTKVT (339 aa). ATP is bound by residues 480–483, lysine 499, and aspartate 501; that span reads CEYI.

The protein belongs to the tubulin--tyrosine ligase family.

In terms of biological role, regulates microtubule dynamics in uterine muscle cells. The protein is Tubulin--tyrosine ligase-like protein 12 of Caenorhabditis briggsae.